The primary structure comprises 428 residues: Probable dual-specificity RNA methyltransferase RlmN 2 (428 aa).

Glu-142 serves as the catalytic Proton acceptor. One can recognise a Radical SAM core domain in the interval 148–414; sequence FAGRATACVS…STVRQRRGID (267 aa). Cys-155 and Cys-419 form a disulfide bridge. [4Fe-4S] cluster contacts are provided by Cys-162, Cys-166, and Cys-169. Residues 207 to 228 show a composition bias toward basic and acidic residues; sequence MRDPSPGREAGEKSRDEADRHR. The interval 207 to 232 is disordered; it reads MRDPSPGREAGEKSRDEADRHRAPPT. S-adenosyl-L-methionine-binding positions include 244-245, Ser-276, 299-301, and Asn-375; these read GE and SLH. Cys-419 serves as the catalytic S-methylcysteine intermediate.

It belongs to the radical SAM superfamily. RlmN family. The cofactor is [4Fe-4S] cluster.

The protein localises to the cytoplasm. The catalysed reaction is adenosine(2503) in 23S rRNA + 2 reduced [2Fe-2S]-[ferredoxin] + 2 S-adenosyl-L-methionine = 2-methyladenosine(2503) in 23S rRNA + 5'-deoxyadenosine + L-methionine + 2 oxidized [2Fe-2S]-[ferredoxin] + S-adenosyl-L-homocysteine. The enzyme catalyses adenosine(37) in tRNA + 2 reduced [2Fe-2S]-[ferredoxin] + 2 S-adenosyl-L-methionine = 2-methyladenosine(37) in tRNA + 5'-deoxyadenosine + L-methionine + 2 oxidized [2Fe-2S]-[ferredoxin] + S-adenosyl-L-homocysteine. Specifically methylates position 2 of adenine 2503 in 23S rRNA and position 2 of adenine 37 in tRNAs. The chain is Probable dual-specificity RNA methyltransferase RlmN 2 from Opitutus terrae (strain DSM 11246 / JCM 15787 / PB90-1).